Here is a 670-residue protein sequence, read N- to C-terminus: MLFNEHQKKAISYISGPCLILAGAGSGKTRVIINKIVHLIKICHFDPKCITAITFTNKAACEMKSRILNVLSVNVSNLVKISTFHALGLEIIKSEIELLNIKSNFTIFDEQDQISILQEIVSKEDRSFVRQIRQSISNWKNKLLCPNQVNKISNSSIEFKFFRYYELYNAYLKSSNILDFDDLIFLPTILLRDNKLSRERWNDKIKYLLVDEYQDTNFIQYKLIKLLSSKRSNFTLVGDDDQSIYSWRGANIHNFESLKHDYPNLRTIIMQHNYRSSGRILKVANALISNNLHFFNKKLFSNLDYGSIVEIISAKNEEDEARVILQTLMLHKSNYNAQYKDYAILYRSNYQVKIFEKFLIKFKIPYKILANISFFSRPEIKDLIAYLRLIINPDDNAAFLRVVNRPLRGIGAVTLQKLKEWSKKRNQSFFMASLDIGLESILPVHNLKSLQEFVYLIQTISYQIQLNPIEVLEKLVATIKYEKWLMRSLKFSKLYVASIKNISIVLNWIINELKYKIMNSKKFVMKYLIDIISEFILQNSLNEDIVINNDYVQLMTLHASKGLEFLYVFIVGVEEGVLPYYRNTTMENNIDEERRLAYVGITRAQKKLFLSYAIQRCQYGVVINTKPSRFLRELPQSDILWQKSKILNLNEKNNFLFKAYKKSLKKKLLR.

The 277-residue stretch at 1-277 (MLFNEHQKKA…IIMQHNYRSS (277 aa)) folds into the UvrD-like helicase ATP-binding domain. ATP-binding positions include 22–29 (AGAGSGKT) and R275. The UvrD-like helicase C-terminal domain occupies 278-562 (GRILKVANAL…QLMTLHASKG (285 aa)).

It belongs to the helicase family. UvrD subfamily. Homodimer.

It catalyses the reaction Couples ATP hydrolysis with the unwinding of duplex DNA by translocating in the 3'-5' direction.. The enzyme catalyses ATP + H2O = ADP + phosphate + H(+). In terms of biological role, rep helicase is a single-stranded DNA-dependent ATPase involved in DNA replication; it can initiate unwinding at a nick in the DNA. It binds to the single-stranded DNA and acts in a progressive fashion along the DNA in the 3' to 5' direction. This is ATP-dependent DNA helicase Rep from Buchnera aphidicola subsp. Baizongia pistaciae (strain Bp).